Here is a 241-residue protein sequence, read N- to C-terminus: MYQKSLLFSLLATSALAQFPIPDSKGSVTFDAPYEVAAGKTYDGGYKTYGRGVSCSGQGEGGQDDAVFLIQEGGTLKNAIIGSDQIEGVYCLGACTIENVWWEAVCEDALSLKGGSGPYNIIGGGAQGADDKVIQHNSGGQVNIDGFTVYDFGKLYRSCGNCDEQHARTVTIRNVVANSGKTLVGINSNLGDTASIDSSTCATDVKKICVEYKGNNSGDEPEEVSEGPSDACQYSEPLSSC.

Residues 1–17 form the signal peptide; it reads MYQKSLLFSLLATSALA. N215 carries an N-linked (GlcNAc...) asparagine glycan. The tract at residues 215–241 is disordered; it reads NNSGDEPEEVSEGPSDACQYSEPLSSC.

The protein belongs to the polysaccharide lyase 3 family. It depends on Ca(2+) as a cofactor.

It localises to the secreted. The enzyme catalyses Eliminative cleavage of (1-&gt;4)-alpha-D-galacturonan to give oligosaccharides with 4-deoxy-alpha-D-galact-4-enuronosyl groups at their non-reducing ends.. Its function is as follows. Pectinolytic enzyme consist of four classes of enzymes: pectin lyase, polygalacturonase, pectin methylesterase and rhamnogalacturonase. Among pectinolytic enzymes, pectin lyase is the most important in depolymerization of pectin, since it cleaves internal glycosidic bonds of highly methylated pectins. Favors pectate, the anion, over pectin, the methyl ester. This chain is Probable pectate lyase D (plyD), found in Neosartorya fischeri (strain ATCC 1020 / DSM 3700 / CBS 544.65 / FGSC A1164 / JCM 1740 / NRRL 181 / WB 181) (Aspergillus fischerianus).